Here is a 360-residue protein sequence, read N- to C-terminus: MIATLERREGVSLWERFCAWITSTENRLYIGWFGCLMFPTLLTATSCFIIAFIAAPPVDIDGIREPVAGSLLYGNNIISGAVIPSSNAIGMHFYPIWEAASVDEWLYNGGPYQLIVLHFLLGVASYMGREWELSYRLGMRPWIFVAFSAPVAAASAVFLVYPIGQGSFSDGMPLGISGTFNFMLVFQAEHNILMHPFHMAGVAGVFGGSLFSAMHGSLVTSSLIRETTENESTNYGYKFGQEEETYNIVAAHGYFGRLIFQYASFNNSRALHFFLALWPVLGIWLTAMGISTMAFNLNGFNFNQSVVDSQGRVINTWADIINRADLGMEVMHERNAHNFPLDLASGDVLPVAFTAPAVNA.

Transmembrane regions (helical) follow at residues 29–46 (YIGW…TATS), 118–133 (HFLL…EWEL), and 142–156 (WIFV…AASA). Histidine 118 contributes to the chlorophyll a binding site. Tyrosine 126 serves as a coordination point for pheophytin a. [CaMn4O5] cluster-binding residues include aspartate 170 and glutamate 189. The helical transmembrane segment at 197–218 (FHMAGVAGVFGGSLFSAMHGSL) threads the bilayer. A chlorophyll a-binding site is contributed by histidine 198. A quinone-binding positions include histidine 215 and 264-265 (SF). Residue histidine 215 participates in Fe cation binding. Histidine 272 contributes to the Fe cation binding site. A helical transmembrane segment spans residues 274–288 (FLALWPVLGIWLTAM). [CaMn4O5] cluster contacts are provided by histidine 332, glutamate 333, aspartate 342, and alanine 344. Residues 345–360 (SGDVLPVAFTAPAVNA) constitute a propeptide that is removed on maturation.

It belongs to the reaction center PufL/M/PsbA/D family. PSII is composed of 1 copy each of membrane proteins PsbA, PsbB, PsbC, PsbD, PsbE, PsbF, PsbH, PsbI, PsbJ, PsbK, PsbL, PsbM, PsbT, PsbX, PsbY, PsbZ, Psb30/Ycf12, at least 3 peripheral proteins of the oxygen-evolving complex and a large number of cofactors. It forms dimeric complexes. The D1/D2 heterodimer binds P680, chlorophylls that are the primary electron donor of PSII, and subsequent electron acceptors. It shares a non-heme iron and each subunit binds pheophytin, quinone, additional chlorophylls, carotenoids and lipids. D1 provides most of the ligands for the Mn4-Ca-O5 cluster of the oxygen-evolving complex (OEC). There is also a Cl(-1) ion associated with D1 and D2, which is required for oxygen evolution. The PSII complex binds additional chlorophylls, carotenoids and specific lipids. serves as cofactor. In terms of processing, tyr-161 forms a radical intermediate that is referred to as redox-active TyrZ, YZ or Y-Z. Post-translationally, C-terminally processed by CTPA; processing is essential to allow assembly of the oxygen-evolving complex and thus photosynthetic growth.

Its subcellular location is the plastid. The protein resides in the chloroplast thylakoid membrane. It carries out the reaction 2 a plastoquinone + 4 hnu + 2 H2O = 2 a plastoquinol + O2. Its function is as follows. Photosystem II (PSII) is a light-driven water:plastoquinone oxidoreductase that uses light energy to abstract electrons from H(2)O, generating O(2) and a proton gradient subsequently used for ATP formation. It consists of a core antenna complex that captures photons, and an electron transfer chain that converts photonic excitation into a charge separation. The D1/D2 (PsbA/PsbD) reaction center heterodimer binds P680, the primary electron donor of PSII as well as several subsequent electron acceptors. This is Photosystem II protein D1 from Thalassiosira pseudonana (Marine diatom).